Consider the following 114-residue polypeptide: Histone H2B (114 aa).

Positions 1–22 (MAKTPSKKAAKAPKKAGSKRNK) are disordered. K3 is modified (N6-acetyllysine). A Glycyl lysine isopeptide (Lys-Gly) (interchain with G-Cter in ubiquitin) cross-link involves residue K110.

The protein belongs to the histone H2B family. The nucleosome is a histone octamer containing two molecules each of H2A, H2B, H3 and H4 assembled in one H3-H4 heterotetramer and two H2A-H2B heterodimers. The octamer wraps approximately 147 bp of DNA. In terms of processing, monoubiquitination of Lys-110 gives a specific tag for epigenetic transcriptional activation and is also prerequisite for histone H3 'Lys-4' and 'Lys-79' methylation.

The protein localises to the nucleus. It is found in the chromosome. Functionally, core component of nucleosome. Nucleosomes wrap and compact DNA into chromatin, limiting DNA accessibility to the cellular machineries which require DNA as a template. Histones thereby play a central role in transcription regulation, DNA repair, DNA replication and chromosomal stability. DNA accessibility is regulated via a complex set of post-translational modifications of histones, also called histone code, and nucleosome remodeling. This chain is Histone H2B, found in Olisthodiscus luteus (Marine phytoflagellate).